The chain runs to 387 residues: Adaptive-response sensory kinase SasA (387 aa).

The interval 1-97 (MGESLSPQAL…TDQLANQLPQ (97 aa)) is interacts with KaiC. Residues 158 to 382 (LVAHDLRNPL…TFHFTMPVYR (225 aa)) form the Histidine kinase domain. The residue at position 161 (His-161) is a Phosphohistidine; by autocatalysis.

In terms of assembly, homooligomerizes. Part of the circadian clock (KaiA, KaiB, KaiC, CikA, RpaA, SasA), the composition of which varies during the circadian cycle. Binds to the CI domain of KaiC; KaiB(fs) and SasA compete for the binding site. Binds preferentially to doubly phosphorylated KaiC. Interacts with LdpA. Post-translationally, autophosphorylates in vitro.

The enzyme catalyses ATP + protein L-histidine = ADP + protein N-phospho-L-histidine.. In terms of biological role, member of the two-component regulatory system SasA/RpaA involved in genome-wide circadian gene expression. One of three clock output pathways. Participates in the KaiABC clock protein complex, which constitutes the main circadian regulator in cyanobacteria, via its interaction with KaiC. Required for robustness of the circadian rhythm of gene expression and involved in clock output. KaiC enhances the autophosphorylation activity of SasA, which then transfers its phosphate group to RpaA to activate it. Phosphotransfer is maximal when KaiC phosphorylation is active during the circadian cycle; this two-component system is activated by fully phosphorylated KaiC. A very robust clock is reconstituted with KaiA, KaiB, KaiC, SasA, CikA and RpaA; output is measured by transcription from an appropriate reporter. In addition to its output function, recruits fold-shifted KaiB (KaiB(fs)) to KaiC to cooperatively form the KaiB(6):KaiC(6) complex (independent of SasA kinase activity); at physiological concentrations increases their association. At higher concentrations SasA and KaiB(fs) compete to bind to KaiC. Mutations that decrease cooperativity nearly phenocopy a deletion mutation. Its function is as follows. Autophosphorylation and phosphotransfer activities are not essential for clock rhythms in continuous light, but they are essential for adaptation to light/dark cycles. The chain is Adaptive-response sensory kinase SasA from Synechococcus elongatus (strain ATCC 33912 / PCC 7942 / FACHB-805) (Anacystis nidulans R2).